A 130-amino-acid polypeptide reads, in one-letter code: Small ribosomal subunit protein uS11 (130 aa).

This sequence belongs to the universal ribosomal protein uS11 family. Part of the 30S ribosomal subunit. Interacts with proteins S7 and S18. Binds to IF-3.

Functionally, located on the platform of the 30S subunit, it bridges several disparate RNA helices of the 16S rRNA. Forms part of the Shine-Dalgarno cleft in the 70S ribosome. The chain is Small ribosomal subunit protein uS11 from Xylella fastidiosa (strain M23).